Reading from the N-terminus, the 95-residue chain is Small ribosomal subunit protein bS6 (95 aa).

The protein belongs to the bacterial ribosomal protein bS6 family.

Functionally, binds together with bS18 to 16S ribosomal RNA. The chain is Small ribosomal subunit protein bS6 from Desulforamulus reducens (strain ATCC BAA-1160 / DSM 100696 / MI-1) (Desulfotomaculum reducens).